The sequence spans 435 residues: ATP-dependent protease ATPase subunit HslU (435 aa).

Residues Ile18, 60-65, Asp248, Glu313, and Arg385 contribute to the ATP site; that span reads GVGKTE.

It belongs to the ClpX chaperone family. HslU subfamily. In terms of assembly, a double ring-shaped homohexamer of HslV is capped on each side by a ring-shaped HslU homohexamer. The assembly of the HslU/HslV complex is dependent on binding of ATP.

Its subcellular location is the cytoplasm. ATPase subunit of a proteasome-like degradation complex; this subunit has chaperone activity. The binding of ATP and its subsequent hydrolysis by HslU are essential for unfolding of protein substrates subsequently hydrolyzed by HslV. HslU recognizes the N-terminal part of its protein substrates and unfolds these before they are guided to HslV for hydrolysis. The protein is ATP-dependent protease ATPase subunit HslU of Rhizobium meliloti (strain 1021) (Ensifer meliloti).